Here is a 199-residue protein sequence, read N- to C-terminus: Recombination protein RecR (199 aa).

A C4-type zinc finger spans residues 57-72; it reads CRSCRTFTEESHCPIC. The region spanning 81–176 is the Toprim domain; that stretch reads EQICVVETPA…SVSRIAHGVP (96 aa).

The protein belongs to the RecR family.

In terms of biological role, may play a role in DNA repair. It seems to be involved in an RecBC-independent recombinational process of DNA repair. It may act with RecF and RecO. The sequence is that of Recombination protein RecR from Shewanella sediminis (strain HAW-EB3).